The sequence spans 216 residues: Elongation factor Ts (216 aa).

The interval 81–84 is involved in Mg(2+) ion dislocation from EF-Tu; it reads TDFV.

The protein belongs to the EF-Ts family.

It is found in the cytoplasm. In terms of biological role, associates with the EF-Tu.GDP complex and induces the exchange of GDP to GTP. It remains bound to the aminoacyl-tRNA.EF-Tu.GTP complex up to the GTP hydrolysis stage on the ribosome. This Geobacter metallireducens (strain ATCC 53774 / DSM 7210 / GS-15) protein is Elongation factor Ts.